The following is a 175-amino-acid chain: Peptide deformylase (175 aa).

The Fe cation site is built by C98 and H140. E141 is an active-site residue. H144 provides a ligand contact to Fe cation.

The protein belongs to the polypeptide deformylase family. Fe(2+) is required as a cofactor.

The catalysed reaction is N-terminal N-formyl-L-methionyl-[peptide] + H2O = N-terminal L-methionyl-[peptide] + formate. In terms of biological role, removes the formyl group from the N-terminal Met of newly synthesized proteins. Requires at least a dipeptide for an efficient rate of reaction. N-terminal L-methionine is a prerequisite for activity but the enzyme has broad specificity at other positions. The chain is Peptide deformylase from Nitrobacter hamburgensis (strain DSM 10229 / NCIMB 13809 / X14).